A 280-amino-acid chain; its full sequence is DegV domain-containing protein CA_C1624 (280 aa).

The DegV domain maps to 4-279; the sequence is IALITDSTSD…PGLLGVVIFK (276 aa). 2 residues coordinate hexadecanoate: threonine 60 and serine 93.

Its function is as follows. May bind long-chain fatty acids, such as palmitate, and may play a role in lipid transport or fatty acid metabolism. This is DegV domain-containing protein CA_C1624 from Clostridium acetobutylicum (strain ATCC 824 / DSM 792 / JCM 1419 / IAM 19013 / LMG 5710 / NBRC 13948 / NRRL B-527 / VKM B-1787 / 2291 / W).